We begin with the raw amino-acid sequence, 477 residues long: Ubiquitin carboxyl-terminal hydrolase 7 (477 aa).

Positions 2-77 (LTVSVKWQKK…LMMMGTADEI (76 aa)) constitute a Ubiquitin-like domain. Residues 104 to 473 (AGLVNLGNTC…MAYIVMYKAR (370 aa)) form the USP domain. Cys113 acts as the Nucleophile in catalysis. Residues 171-190 (MPFWMVLQKKYPQFAQLHNG) form a calmodulin-binding region. The interval 364-401 (QASAKSSSKGDDVKMTDAEGSSNQSGESSTGDQQEGAS) is disordered. Over residues 371–380 (SKGDDVKMTD) the composition is skewed to basic and acidic residues. The span at 382–399 (EGSSNQSGESSTGDQQEG) shows a compositional bias: polar residues. The Proton acceptor role is filled by His425.

It belongs to the peptidase C19 family. Interacts with calmodulin (CaM).

The enzyme catalyses Thiol-dependent hydrolysis of ester, thioester, amide, peptide and isopeptide bonds formed by the C-terminal Gly of ubiquitin (a 76-residue protein attached to proteins as an intracellular targeting signal).. Its function is as follows. Recognizes and hydrolyzes the peptide bond at the C-terminal Gly of ubiquitin. Involved in the processing of poly-ubiquitin precursors as well as that of ubiquitinated proteins. The chain is Ubiquitin carboxyl-terminal hydrolase 7 (UBP7) from Arabidopsis thaliana (Mouse-ear cress).